We begin with the raw amino-acid sequence, 427 residues long: Isocitrate lyase (427 aa).

Position 89-91 (89-91 (SGW)) interacts with substrate. D150 contributes to the Mg(2+) binding site. C188 (proton acceptor) is an active-site residue. Substrate contacts are provided by residues 189 to 190 (GH), R225, 310 to 314 (NCSPS), and T344.

This sequence belongs to the isocitrate lyase/PEP mutase superfamily. Isocitrate lyase family. In terms of assembly, homotetramer. Mg(2+) serves as cofactor.

The enzyme catalyses D-threo-isocitrate = glyoxylate + succinate. The protein operates within carbohydrate metabolism; glyoxylate cycle; (S)-malate from isocitrate: step 1/2. Involved in the metabolic adaptation in response to environmental changes. Catalyzes the reversible formation of succinate and glyoxylate from isocitrate, a key step of the glyoxylate cycle, which operates as an anaplerotic route for replenishing the tricarboxylic acid cycle during growth on fatty acid substrates. In Halalkalibacterium halodurans (strain ATCC BAA-125 / DSM 18197 / FERM 7344 / JCM 9153 / C-125) (Bacillus halodurans), this protein is Isocitrate lyase (aceA).